An 876-amino-acid chain; its full sequence is Extended synaptotagmin-2-B (876 aa).

The interval 1–21 (MASESGAEKGPPTTPAENGQP) is disordered. At 1 to 35 (MASESGAEKGPPTTPAENGQPGVPIAAAVAADEQG) the chain is on the cytoplasmic side. Residues 36 to 56 (MISVDIAGLFYQFSKTFILIF) form a helical membrane-spanning segment. Residues 57 to 59 (PVY) are Lumenal-facing. Residues 60–80 (VLGYFGLSFSWLLIALVLLLW) form a helical membrane-spanning segment. At 81–876 (WRRNKGNKNS…EDGTRAAASS (796 aa)) the chain is on the cytoplasmic side. The SMP-LTD domain occupies 123–302 (DIERAEWLNK…LPNRITVPLV (180 aa)). C2 domains follow at residues 301 to 421 (LVSD…DEWF) and 446 to 592 (NLDQ…HLNN). Ca(2+)-binding residues include Lys-332, Asp-333, Asp-345, Asp-392, Glu-393, Asp-394, Asp-396, Asp-398, and Asp-399. Residues 614 to 714 (VRSPDEQHTS…KEPTPSIASD (101 aa)) are disordered. Pro residues predominate over residues 636–656 (PPTPQMPAPSPAVAHKPPPTP). The span at 686 to 698 (SSSSLSGSSFTYS) shows a compositional bias: low complexity. In terms of domain architecture, C2 3 spans 741–863 (PLGQIQLTIR…DAAKGWTQWF (123 aa)). Residues 788-795 (KRRSGRRK) form a required for phosphatidylinositol 4,5-bisphosphate-dependent location at the cell membrane region.

It belongs to the extended synaptotagmin family. Interacts with fgfr1 that has been activated by fgf1 binding. Interacts (via C2 domains) with the AP-2 complex (via an alpha subunit). Identified in a complex with the AP-2 complex and fgfr1.

The protein localises to the cell membrane. Its subcellular location is the endoplasmic reticulum membrane. Tethers the endoplasmic reticulum to the cell membrane and promotes the formation of appositions between the endoplasmic reticulum and the cell membrane. Binds glycerophospholipids in a barrel-like domain and may play a role in cellular lipid transport. Plays a role in the rapid internalization of fgfr1 that has been activated by fgf1 binding; this occurs most likely via the AP-2 complex. Required for normal fgf signaling and the activation of downstream signaling cascades via its role in the internalization of activated fgfr1. Required for normal embryonic development via its role in fgf signaling and the downstream regulation of t/xBRA expression. This Xenopus laevis (African clawed frog) protein is Extended synaptotagmin-2-B (esyt2-b).